The following is a 398-amino-acid chain: tRNA-specific 2-thiouridylase MnmA (398 aa).

Residues Ala18–Ser25 and Leu44 contribute to the ATP site. The Nucleophile role is filled by Cys112. An intrachain disulfide couples Cys112 to Cys213. Gly136 lines the ATP pocket. The interaction with tRNA stretch occupies residues Arg163–Gln165. Cys213 acts as the Cysteine persulfide intermediate in catalysis.

Belongs to the MnmA/TRMU family.

Its subcellular location is the cytoplasm. It catalyses the reaction S-sulfanyl-L-cysteinyl-[protein] + uridine(34) in tRNA + AH2 + ATP = 2-thiouridine(34) in tRNA + L-cysteinyl-[protein] + A + AMP + diphosphate + H(+). Functionally, catalyzes the 2-thiolation of uridine at the wobble position (U34) of tRNA, leading to the formation of s(2)U34. This Agrobacterium fabrum (strain C58 / ATCC 33970) (Agrobacterium tumefaciens (strain C58)) protein is tRNA-specific 2-thiouridylase MnmA.